A 35-amino-acid polypeptide reads, in one-letter code: Probable endonuclease 4 (35 aa).

Glu15 provides a ligand contact to Zn(2+).

Belongs to the AP endonuclease 2 family. The cofactor is Zn(2+).

It carries out the reaction Endonucleolytic cleavage to 5'-phosphooligonucleotide end-products.. Endonuclease IV plays a role in DNA repair. It cleaves phosphodiester bonds at apurinic or apyrimidinic (AP) sites, generating a 3'-hydroxyl group and a 5'-terminal sugar phosphate. The protein is Probable endonuclease 4 (nfo) of Yersinia enterocolitica.